The following is a 373-amino-acid chain: Mitochondrial fission regulator 2 (373 aa).

S136 bears the Phosphoserine mark. The stretch at 151-179 (VSEAAIKKIAALEDELTSLRAQIAAIVAM) forms a coiled coil. Disordered regions lie at residues 189-331 (GFIS…WDPV) and 346-373 (DDSF…GSRF). A compositionally biased stretch (pro residues) spans 224–239 (SPPPLPPPPPPLPPPQ). Composition is skewed to basic and acidic residues over residues 275-287 (KKTD…ESQR) and 297-310 (VLKD…RPVE). Phosphoserine occurs at positions 312 and 348. Over residues 354-373 (RSWQGSPFSSPETSRNGSRF) the composition is skewed to polar residues.

It belongs to the MTFR1 family.

It is found in the mitochondrion. Functionally, may play a role in mitochondrial aerobic respiration essentially in the testis. Can also promote mitochondrial fission. This chain is Mitochondrial fission regulator 2 (Mtfr2), found in Rattus norvegicus (Rat).